Here is a 554-residue protein sequence, read N- to C-terminus: Hydroxylamine reductase (554 aa).

The [2Fe-2S] cluster site is built by Cys3, Cys6, Cys18, and Cys25. 8 residues coordinate hybrid [4Fe-2O-2S] cluster: His252, Glu276, Cys320, Cys408, Cys436, Cys461, Glu495, and Lys497. Cys408 is modified (cysteine persulfide).

Belongs to the HCP family. The cofactor is [2Fe-2S] cluster. It depends on hybrid [4Fe-2O-2S] cluster as a cofactor.

It localises to the cytoplasm. The catalysed reaction is A + NH4(+) + H2O = hydroxylamine + AH2 + H(+). Its function is as follows. Catalyzes the reduction of hydroxylamine to form NH(3) and H(2)O. The chain is Hydroxylamine reductase from Photobacterium profundum (strain SS9).